Here is a 998-residue protein sequence, read N- to C-terminus: Methyl sulfide methyltransferase-associated sensor (998 aa).

One can recognise a PAS 1 domain in the interval 40-77; sequence FGYSPKDFISGGLGYADIIYPADLEIAVSQFFSYVEKD. In terms of domain architecture, PAC 1 spans 117 to 169; it reads FTQQYRLLNKSGDVLWVEAEIKVLEEEEGKAGLFQVTVFDISRWKHTEKAMPA. The region spanning 209-246 is the PAS 2 domain; that stretch reads LGYTPEDFTSGRIVYTDIIHPDDLDNVRAEVSKNTEEG. One can recognise a PAC 2 domain in the interval 250-302; that stretch reads FSKEYRVLAKSGEVRYVDERTLIRRNEKGEITCYQGILLDITQRKEAEELILS. Residues 314–458 enclose the GAF 1 domain; sequence ASLDEVLLLL…NAYLAGIAIE (145 aa). The region spanning 469–540 is the PAS 3 domain; the sequence is SENRFRTIFD…ENMQKIKAEG (72 aa). Residues 609–752 enclose the GAF 2 domain; the sequence is ASLKEITDFA…LMQGMWQLIQ (144 aa). Cys656 lines the heme pocket. Residues 783–998 form the Histidine kinase domain; that stretch reads EFVEEMMFPE…GNLMHVKLPK (216 aa).

Requires heme as cofactor. In terms of processing, autophosphorylates: autophosphorylation is dependent on the redox state of heme cofactor and is promoted upon reduction.

The protein localises to the cytoplasm. The enzyme catalyses ATP + protein L-histidine = ADP + protein N-phospho-L-histidine.. Heme-binding sensor kinase component part of a two-component regulatory system involved in methyl sulfide metabolism. Does not act as a phytochrome-like photoreceptor. The protein is Methyl sulfide methyltransferase-associated sensor (msmS) of Methanosarcina acetivorans (strain ATCC 35395 / DSM 2834 / JCM 12185 / C2A).